The following is a 478-amino-acid chain: Methionine aminopeptidase 2 (478 aa).

The interval 1-122 (MAGVEQAASF…TDPPSVPICD (122 aa)) is disordered. Ala2 carries the N-acetylalanine modification. Residues 36–46 (KKKRRKKKKGK) show a composition bias toward basic residues. At Ser60 the chain carries Phosphoserine; alternate. Ser60 carries an O-linked (GlcNAc) serine; alternate glycan. The segment covering 80-92 (ERDDDDEDGDGDA) has biased composition (acidic residues). Residues 97–109 (GKKKKKKKKKRGP) show a composition bias toward basic residues. His231 is a binding site for substrate. Residues Asp251, Asp262, and His331 each coordinate a divalent metal cation. His339 lines the substrate pocket. Glu364 and Glu459 together coordinate a divalent metal cation.

This sequence belongs to the peptidase M24A family. Methionine aminopeptidase eukaryotic type 2 subfamily. In terms of assembly, binds EIF2S1 at low magnesium concentrations. Interacts strongly with the eIF-2 gamma-subunit EIF2S3. Co(2+) is required as a cofactor. The cofactor is Zn(2+). Mn(2+) serves as cofactor. It depends on Fe(2+) as a cofactor. Contains approximately 12 O-linked N-acetylglucosamine (GlcNAc) residues. O-glycosylation is required for EIF2S1 binding.

The protein localises to the cytoplasm. It catalyses the reaction Release of N-terminal amino acids, preferentially methionine, from peptides and arylamides.. Its function is as follows. Cotranslationally removes the N-terminal methionine from nascent proteins. The N-terminal methionine is often cleaved when the second residue in the primary sequence is small and uncharged (Met-Ala-, Cys, Gly, Pro, Ser, Thr, or Val). Functionally, protects eukaryotic initiation factor EIF2S1 from translation-inhibiting phosphorylation by inhibitory kinases such as EIF2AK2/PKR and EIF2AK1/HCR. Plays a critical role in the regulation of protein synthesis. This is Methionine aminopeptidase 2 (Metap2) from Mus musculus (Mouse).